We begin with the raw amino-acid sequence, 501 residues long: Lysine--tRNA ligase (501 aa).

Mg(2+) is bound by residues glutamate 411 and glutamate 418.

It belongs to the class-II aminoacyl-tRNA synthetase family. As to quaternary structure, homodimer. It depends on Mg(2+) as a cofactor.

It localises to the cytoplasm. The enzyme catalyses tRNA(Lys) + L-lysine + ATP = L-lysyl-tRNA(Lys) + AMP + diphosphate. This chain is Lysine--tRNA ligase, found in Pseudomonas aeruginosa (strain LESB58).